Reading from the N-terminus, the 113-residue chain is Gonadotropin subunit beta (113 aa).

Cystine bridges form between Cys6–Cys54, Cys20–Cys69, Cys23–Cys107, Cys31–Cys85, Cys35–Cys87, and Cys90–Cys97. N-linked (GlcNAc...) asparagine glycosylation occurs at Asn10.

It belongs to the glycoprotein hormones subunit beta family. As to quaternary structure, heterodimer of an alpha and a beta chain.

Its subcellular location is the secreted. In terms of biological role, involved in gametogenesis and steroidogenesis. The protein is Gonadotropin subunit beta (cgb) of Muraenesox cinereus (Daggertooth pike conger).